Reading from the N-terminus, the 344-residue chain is MPRVYIGRLSYNVREKDIQRFFSGYGRLLEVDLKNGYGFVEFEDSRDADDAVYELNGKELCGERVIVEHARGPRRDRDGYSYGSRSGGGGYSSRRTSGRDKYGPPVRTEYRLIVENLSSRCSWQDLKDFMRQAGEVTYADAHKERTNEGVIEFRSYSDMKRALDKLDGTEINGRNIRLIEDKPRTSHRRSYSGSRSRSRSRRRSRSRSRRSSRSRSRSISKSRSRSRSRSKGRSRSRSKGRKSRSKSKSKPKSDRGSHSHSRSRSKDEYEKSRSRSRSRSPKENGKGDIKSKSRSRSQSRSNSPLPVPPSKARSVSPPPKRATSRSRSRSRSKSRSRSRSSSRD.

An RRM 1 domain is found at 1–72 (MPRVYIGRLS…ERVIVEHARG (72 aa)). Phosphoserine occurs at positions 45, 81, and 84. The interval 75 to 103 (RDRDGYSYGSRSGGGGYSSRRTSGRDKYG) is disordered. Residues 110–183 (YRLIVENLSS…RNIRLIEDKP (74 aa)) form the RRM 2 domain. Lys-165 carries the N6-acetyllysine modification. Residues 176–344 (IRLIEDKPRT…RSRSRSSSRD (169 aa)) form a disordered region. Lys-182 is covalently cross-linked (Glycyl lysine isopeptide (Lys-Gly) (interchain with G-Cter in SUMO2)). Over residues 185 to 250 (TSHRRSYSGS…RKSRSKSKSK (66 aa)) the composition is skewed to basic residues. 2 stretches are compositionally biased toward basic and acidic residues: residues 264–273 (RSKDEYEKSR) and 280–291 (SPKENGKGDIKS). A phosphoserine mark is found at Ser-297 and Ser-299. Phosphoserine; by DYRK1A is present on Ser-303. Phosphoserine is present on residues Ser-314 and Ser-316. Positions 322 to 344 (ATSRSRSRSRSKSRSRSRSSSRD) are enriched in basic residues.

This sequence belongs to the splicing factor SR family. As to quaternary structure, binds SREK1/SFRS12. Interacts with DYRK1A. Extensively phosphorylated on serine residues in the RS domain. Phosphorylated by DYRK1A, probably in the RS domain. Phosphorylation by DYRK1A modulates alternative splice site selection and inhibits the expression of MAPT/Tau exon 10.

Its subcellular location is the nucleus. It is found in the nucleus speckle. Its function is as follows. Plays a role in constitutive splicing and modulates the selection of alternative splice sites. Plays a role in the alternative splicing of MAPT/Tau exon 10. Binds to alternative exons of TNC pre-mRNA and promotes the expression of alternatively spliced TNC. Plays a role in wound healing and in the regulation of keratinocyte differentiation and proliferation via its role in alternative splicing. In Homo sapiens (Human), this protein is Serine/arginine-rich splicing factor 6 (SRSF6).